The primary structure comprises 179 residues: Replication restart protein DnaT (179 aa).

Over residues 151 to 168 (SRSSNGGMPQRDINSVSE) the composition is skewed to polar residues. Residues 151-179 (SRSSNGGMPQRDINSVSEPDNHIPPGFRG) are disordered.

It belongs to the DnaT family. Homooligomerizes. Interacts with PriB. Component of the replication restart primosome. Primosome assembly occurs via a 'hand-off' mechanism. PriA binds to replication forks, subsequently PriB then DnaT bind; DnaT then displaces ssDNA to generate the helicase loading substrate.

Functionally, involved in the restart of stalled replication forks, which reloads the replicative helicase on sites other than the origin of replication. Can function in multiple replication restart pathways. Displaces ssDNA from a PriB-ssDNA complex. Probably forms a spiral filament on ssDNA. The polypeptide is Replication restart protein DnaT (Salmonella schwarzengrund (strain CVM19633)).